Reading from the N-terminus, the 1345-residue chain is Vascular endothelial growth factor receptor 2 (1345 aa).

The N-terminal stretch at 1 to 19 (MESKALLAVALWFCVETRA) is a signal peptide. At 20 to 762 (ASVGLPGDFL…EGAQEKTNLE (743 aa)) the chain is on the extracellular side. N-linked (GlcNAc...) asparagine glycosylation is found at asparagine 46, asparagine 98, asparagine 145, asparagine 160, and asparagine 247. Ig-like C2-type domains lie at 46–111 (NTTL…RDVD), 143–209 (NKNK…INDE), 226–325 (YDVI…TFVR), 330–416 (PFIA…HMVS), 423–542 (PQIG…RVIS), 549–656 (PEIT…LVKQ), and 665–751 (PMIT…TLFI). Residues cysteine 53 and cysteine 105 are joined by a disulfide bond. Residues cysteine 152 and cysteine 202 are joined by a disulfide bond. Residues cysteine 248 and cysteine 309 are joined by a disulfide bond. Residues asparagine 320, asparagine 376, asparagine 397, asparagine 509, asparagine 521, asparagine 578, asparagine 611, asparagine 617, asparagine 629, asparagine 673, asparagine 702, and asparagine 719 are each glycosylated (N-linked (GlcNAc...) asparagine). 2 disulfides stabilise this stretch: cysteine 447/cysteine 528 and cysteine 569/cysteine 640. Cysteine 686 and cysteine 735 form a disulfide bridge. A helical transmembrane segment spans residues 763–783 (VIILVGTAVIAMFFWLLLVIV). Over 784 to 1345 (LRTVKRANEG…SGTTLRSPPV (562 aa)) the chain is Cytoplasmic. Phosphotyrosine is present on tyrosine 799. In terms of domain architecture, Protein kinase spans 832–1160 (LKLGKPLGRG…FSELVEHLGN (329 aa)). ATP-binding positions include 838–846 (LGRGAFGQV) and lysine 866. Position 949 is a phosphotyrosine; by autocatalysis (tyrosine 949). A phosphoserine mark is found at serine 980 and serine 982. Tyrosine 994 is subject to Phosphotyrosine; by autocatalysis. A disulfide bridge links cysteine 1022 with cysteine 1043. Aspartate 1026 acts as the Proton acceptor in catalysis. A phosphotyrosine; by autocatalysis mark is found at tyrosine 1052, tyrosine 1057, tyrosine 1173, and tyrosine 1212. Phosphoserine is present on residues serine 1229 and serine 1233. At threonine 1236 the chain carries Phosphothreonine. Residues 1272–1316 (DRNKLSPSFGGMMPSKSRESVASEGSNQTSGYQSGYHSDDTDTTV) form a disordered region. A compositionally biased stretch (polar residues) spans 1294–1307 (SEGSNQTSGYQSGY). 3 positions are modified to phosphotyrosine; by autocatalysis: tyrosine 1303, tyrosine 1307, and tyrosine 1317.

The protein belongs to the protein kinase superfamily. Tyr protein kinase family. CSF-1/PDGF receptor subfamily. Homodimer in the presence of bound dimeric VEGFA, VEGFC or VEGFD ligands; monomeric in the absence of bound ligands. Can also form heterodimers with FLT1/VEGFR1 and KDR/VEGFR2. Interacts (tyrosine phosphorylated) with LFYN, NCK1, PLCG1. Interacts (tyrosine-phosphorylated active form preferentially) with DAB2IP (via C2 domain and active form preferentially); the interaction occurs at the late phase of VEGFA response and inhibits KDR/VEGFR2 activity. Interacts with SHBSH2D2A/TSAD, GRB2, MYOF, CBL and PDCD6. Interacts (via C-terminus domain) with ERN1 (via kinase domain); the interaction is facilitated in a XBP1 isoform 1- and vascular endothelial growth factor (VEGF)-dependent manner in endothelial cells. Interacts (via juxtamembrane region) with chaperone PDCL3 (via thioredoxin fold region); the interaction leads to increased KDR/VEGFR2 abundance through inhibition of its ubiquitination and degradation. Interacts (tyrosine phosphorylated) with CCDC88A/GIV (via SH2-like region); binding requires autophosphorylation of the KDR/VEGFR2 C-terminal region. Interacts with isoform 2 of BSG. Interacts with SLC31A1; this interaction is induced upon VEGFA stimulation leading to SLC31A1 and KDR subsequent co-internalization to early endosomes, thereby activating KDR downstream signaling in endothelial cells. N-glycosylated. Post-translationally, ubiquitinated. Tyrosine phosphorylation of the receptor promotes its poly-ubiquitination, leading to its degradation via the proteasome or lysosomal proteases. In terms of processing, autophosphorylated on tyrosine residues upon ligand binding. Autophosphorylation occurs in trans, i.e. one subunit of the dimeric receptor phosphorylates tyrosine residues on the other subunit. Phosphorylation at Tyr-949 is important for interaction with SH2D2A/TSAD and VEGFA-mediated reorganization of the actin cytoskeleton. Phosphorylation at Tyr-1173 is important for interaction with PLCG1 and SHB. Phosphorylation at Tyr-1212 is important for interaction with NCK1 and FYN. Dephosphorylated by PTPRJ at Tyr-799, Tyr-949, Tyr-994, Tyr-1052, Tyr-1057, Tyr-1173 and Tyr-1212. The inhibitory disulfide bond between Cys-1022 and Cys-1043 may serve as a specific molecular switch for H(2)S-induced modification that regulates KDR/VEGFR2 function. As to expression, expressed in endothelial cells (at protein level). Detected in embryonic endothelial cells, as well as hematopoietic stem and progenitor cells. Detected in vascular endothelium. Expressed at high levels in adult heart, lung, kidney, brain and skeletal muscle, but is also expressed at lower levels in most other adult tissues.

The protein localises to the cell junction. It localises to the endoplasmic reticulum. The protein resides in the cell membrane. Its subcellular location is the cytoplasm. It is found in the nucleus. The protein localises to the cytoplasmic vesicle. It localises to the early endosome. The protein resides in the secreted. It catalyses the reaction L-tyrosyl-[protein] + ATP = O-phospho-L-tyrosyl-[protein] + ADP + H(+). Its activity is regulated as follows. Present in an inactive conformation in the absence of bound ligand. Binding of VEGFA, VEGFC or VEGFD leads to dimerization and activation by autophosphorylation on tyrosine residues. May be regulated by hydrogen sulfide (H(2)S) levels via a sensitive intracellular disulfide bond. In terms of biological role, tyrosine-protein kinase that acts as a cell-surface receptor for VEGFA, VEGFC and VEGFD. Plays an essential role in the regulation of angiogenesis, vascular development, vascular permeability, and embryonic hematopoiesis. Promotes proliferation, survival, migration and differentiation of endothelial cells. Promotes reorganization of the actin cytoskeleton. Isoforms lacking a transmembrane domain, such as isoform 2, may function as decoy receptors for VEGFA, VEGFC and/or VEGFD. Isoform 2 plays an important role as a negative regulator of VEGFA- and VEGFC-mediated lymphangiogenesis by limiting the amount of free VEGFA and/or VEGFC and by preventing their binding to FLT4. Modulates FLT1 and FLT4 signaling by forming heterodimers. Binding of vascular growth factors to isoform 1 leads to the activation of several signaling cascades. Activation of PLCG1 leads to the production of the cellular signaling molecules diacylglycerol and inositol 1,4,5-trisphosphate and the activation of protein kinase C. Mediates activation of MAPK1/ERK2, MAPK3/ERK1 and the MAP kinase signaling pathway, as well as of the AKT1 signaling pathway. Mediates phosphorylation of PIK3R1, the regulatory subunit of phosphatidylinositol 3-kinase, reorganization of the actin cytoskeleton and activation of PTK2/FAK1. Required for VEGFA-mediated induction of NOS2 and NOS3, leading to the production of the signaling molecule nitric oxide (NO) by endothelial cells. Phosphorylates PLCG1. Promotes phosphorylation of FYN, NCK1, NOS3, PIK3R1, PTK2/FAK1 and SRC. The protein is Vascular endothelial growth factor receptor 2 of Mus musculus (Mouse).